The following is a 400-amino-acid chain: Probable glucan endo-1,6-beta-glucosidase B (400 aa).

The signal sequence occupies residues 1–17 (MIRRLAALSALSGLATA). An N-linked (GlcNAc...) asparagine glycan is attached at asparagine 30. Glutamate 219 acts as the Proton donor in catalysis. Asparagine 272 is a glycosylation site (N-linked (GlcNAc...) asparagine). Glutamate 320 functions as the Nucleophile in the catalytic mechanism.

The protein belongs to the glycosyl hydrolase 5 (cellulase A) family.

It localises to the secreted. The catalysed reaction is Random hydrolysis of (1-&gt;6)-linkages in (1-&gt;6)-beta-D-glucans.. Its function is as follows. Beta-glucanases participate in the metabolism of beta-glucan, the main structural component of the cell wall. Acts on lutean, pustulan and 1,6-oligo-beta-D-glucosides. The chain is Probable glucan endo-1,6-beta-glucosidase B (exgB) from Neosartorya fischeri (strain ATCC 1020 / DSM 3700 / CBS 544.65 / FGSC A1164 / JCM 1740 / NRRL 181 / WB 181) (Aspergillus fischerianus).